We begin with the raw amino-acid sequence, 218 residues long: Probable cutinase 3 (218 aa).

The first 17 residues, 1-17 (MSLRSVLVAALAALAVA), serve as a signal peptide directing secretion. Intrachain disulfides connect C41–C120 and C67–C81. S131 functions as the Nucleophile in the catalytic mechanism. C182 and C189 are joined by a disulfide. Residue D186 is part of the active site. Residue H199 is the Proton donor/acceptor of the active site.

Belongs to the cutinase family.

It localises to the secreted. The enzyme catalyses cutin + H2O = cutin monomers.. In terms of biological role, catalyzes the hydrolysis of complex carboxylic polyesters found in the cell wall of plants. Degrades cutin, a macromolecule that forms the structure of the plant cuticle. The polypeptide is Probable cutinase 3 (Aspergillus terreus (strain NIH 2624 / FGSC A1156)).